The following is a 534-amino-acid chain: MLCLGIEGTAEKTGVGIVDEAGNVLSLRGKPLIPEKGGIHPREAAEHHAKWIPRLIAEACRDAGVELGEIGLISFSRGPGLGPALRTVATAARTLALSLDVPIVGVNHCIGHIEIGRLTTGASDPVSLYVSGGNTQVIAFNEGRYRVFGETLDIAVGNMLDQFARESGLGHPGGPVIEQLALKASEYIELPYSVKGMDISFSGLLTAALRKMEAGASLEDLAYSIQETAFSMLVEVTERALAYTEKNQVLLCGGVAVNRRLRDMLREMCQEHHVEFHMPPPEYCGDNGAMIAWLGQLVYKYRGPDALEDTTVVQRYRTDEVDVPWMRESEAGIELPPDILAKGAEANIYRGQWIGRPCIIKERISKGYRIPEIDQKLRSSRTRREARLINQAKGAGVHTPVLFDVDPDGGVMVMEEVRGTPFRDAVEDTELCSRIGEAIGRLHHAGIIHGDLTGSNIIIRGGDVVFIDFGLGRFSDEIEDMGVDLLVLKKSLESTHYALAGECFSRVLEGYGKIIDADIQSKIREIESRGRYTD.

The tract at residues 1–325 (MLCLGIEGTA…YRTDEVDVPW (325 aa)) is kae1. Fe cation is bound by residues His-108, His-112, and Tyr-129. Residues 129-133 (YVSGG), Asp-161, Gly-174, Glu-178, and Asn-258 each bind L-threonylcarbamoyladenylate. Asp-286 is a Fe cation binding site. The Protein kinase domain occupies 335–534 (LPPDILAKGA…EIESRGRYTD (200 aa)). Residues 340 to 348 (LAKGAEANI) and Lys-361 each bind ATP. Asp-451 serves as the catalytic Proton acceptor; for kinase activity.

The protein in the N-terminal section; belongs to the KAE1 / TsaD family. It in the C-terminal section; belongs to the protein kinase superfamily. Tyr protein kinase family. BUD32 subfamily. Component of the KEOPS complex that consists of Kae1, Bud32, Cgi121 and Pcc1; the whole complex dimerizes. It depends on Fe(2+) as a cofactor.

The protein resides in the cytoplasm. It catalyses the reaction L-seryl-[protein] + ATP = O-phospho-L-seryl-[protein] + ADP + H(+). It carries out the reaction L-threonyl-[protein] + ATP = O-phospho-L-threonyl-[protein] + ADP + H(+). The catalysed reaction is L-threonylcarbamoyladenylate + adenosine(37) in tRNA = N(6)-L-threonylcarbamoyladenosine(37) in tRNA + AMP + H(+). Functionally, required for the formation of a threonylcarbamoyl group on adenosine at position 37 (t(6)A37) in tRNAs that read codons beginning with adenine. Is a component of the KEOPS complex that is probably involved in the transfer of the threonylcarbamoyl moiety of threonylcarbamoyl-AMP (TC-AMP) to the N6 group of A37. The Kae1 domain likely plays a direct catalytic role in this reaction. The Bud32 domain probably displays kinase activity that regulates Kae1 function. In Methanothermobacter thermautotrophicus (strain ATCC 29096 / DSM 1053 / JCM 10044 / NBRC 100330 / Delta H) (Methanobacterium thermoautotrophicum), this protein is Probable bifunctional tRNA threonylcarbamoyladenosine biosynthesis protein.